Here is a 123-residue protein sequence, read N- to C-terminus: Large ribosomal subunit protein bL21 (123 aa).

This sequence belongs to the bacterial ribosomal protein bL21 family. As to quaternary structure, part of the 50S ribosomal subunit. Contacts protein L20.

This protein binds to 23S rRNA in the presence of protein L20. This Sinorhizobium fredii (strain NBRC 101917 / NGR234) protein is Large ribosomal subunit protein bL21.